The primary structure comprises 431 residues: Glutamate-1-semialdehyde 2,1-aminomutase (431 aa).

Lysine 269 is subject to N6-(pyridoxal phosphate)lysine.

This sequence belongs to the class-III pyridoxal-phosphate-dependent aminotransferase family. HemL subfamily. As to quaternary structure, homodimer. Requires pyridoxal 5'-phosphate as cofactor.

It localises to the cytoplasm. It catalyses the reaction (S)-4-amino-5-oxopentanoate = 5-aminolevulinate. Its pathway is porphyrin-containing compound metabolism; protoporphyrin-IX biosynthesis; 5-aminolevulinate from L-glutamyl-tRNA(Glu): step 2/2. The protein operates within porphyrin-containing compound metabolism; chlorophyll biosynthesis. The protein is Glutamate-1-semialdehyde 2,1-aminomutase of Chlorobium luteolum (strain DSM 273 / BCRC 81028 / 2530) (Pelodictyon luteolum).